The chain runs to 1216 residues: Apical endosomal glycoprotein (1216 aa).

The first 22 residues, 1 to 22, serve as a signal peptide directing secretion; the sequence is MPLSSHLLPALVLFLAGSSGWA. Residues 23–1151 lie on the Extracellular side of the membrane; sequence WVPNHCRSPG…SPGNTAAPGS (1129 aa). An LDL-receptor class A 1; truncated domain is found at 26–53; that stretch reads NHCRSPGQAVCNFVCDCRDCSDEAQCGY. One can recognise an MAM 1 domain in the interval 64–222; it reads FACDFEQDPC…DDLEFWDCGL (159 aa). The N-linked (GlcNAc...) asparagine glycan is linked to N203. Residues 228–266 enclose the LDL-receptor class A 2 domain; that stretch reads NCPPGHHHCQNKVCVEPQQLCDGEDNCGDLSDENPLTCG. 3 cysteine pairs are disulfide-bonded: C229–C241, C236–C254, and C248–C265. The MAM 2 domain occupies 269 to 425; that stretch reads IATDFETGLG…DLILSDHCRP (157 aa). The segment at 280–307 is disordered; it reads WNRSEGWSRNHRAGGPERPSWPRRDHSR. N281 and N339 each carry an N-linked (GlcNAc...) asparagine glycan. The disordered stretch occupies residues 429 to 455; sequence VSTLQPLPPGPRAPAPQPLPPSSRLQD. Pro residues predominate over residues 434 to 449; sequence PLPPGPRAPAPQPLPP. The LDL-receptor class A 3 domain maps to 456 to 491; the sequence is SCKQGHLACGDLCVPPEQLCDFEEQCAGGEDEQACG. Cystine bridges form between C457–C468, C464–C481, and C475–C490. MAM domains follow at residues 491–644, 654–809, 811–969, and 971–1138; these read GTTD…DCSP, VSCN…PCWA, NYCS…PCPQ, and GSCD…HCQQ. N-linked (GlcNAc...) asparagine glycosylation is found at N583 and N636. N-linked (GlcNAc...) asparagine glycosylation occurs at N835. A helical transmembrane segment spans residues 1152–1172; that stretch reads VPAVVGSALLLLMLLVLLGLG. The Cytoplasmic portion of the chain corresponds to 1173-1216; it reads GRRWLQKKGSCPFQSNTEATAPGFDNILFNADGVTLPASVTSDP.

The protein localises to the membrane. Functionally, probably involved in the sorting and selective transport of receptors and ligands across polarized epithelia. This is Apical endosomal glycoprotein from Homo sapiens (Human).